The chain runs to 297 residues: Probable terminal-alkyne amino-acid exporter (297 aa).

9 helical membrane-spanning segments follow: residues 6 to 26, 32 to 52, 65 to 85, 95 to 115, 123 to 143, 150 to 170, 178 to 198, 212 to 232, and 249 to 269; these read AVWA…AIRV, GVAG…AIAA, LPMI…LLNW, ASLL…VFLG, IAGS…GGHA, WVVL…KPLL, VACY…PAMV, TVYL…YAVA, and VALV…ALVG. 2 EamA domains span residues 6–137 and 150–281; these read AVWA…AVIA and WVVL…MLIN.

It belongs to the EamA transporter family.

It localises to the cell membrane. Functionally, probably involved in the export of terminal alkyne-containing amino acids, namely L-propargylglycine (Pra) and L-beta-ethynylserine, that are antibiotics synthesized by enzymes encoded in the same gene cluster. The chain is Probable terminal-alkyne amino-acid exporter from Streptantibioticus cattleyicolor (strain ATCC 35852 / DSM 46488 / JCM 4925 / NBRC 14057 / NRRL 8057) (Streptomyces cattleya).